The following is a 159-amino-acid chain: 2-C-methyl-D-erythritol 2,4-cyclodiphosphate synthase (159 aa).

Asp8 and His10 together coordinate a divalent metal cation. 4-CDP-2-C-methyl-D-erythritol 2-phosphate is bound by residues 8–10 and 34–35; these read DVH and HS. His42 provides a ligand contact to a divalent metal cation. 4-CDP-2-C-methyl-D-erythritol 2-phosphate is bound by residues 56-58, 61-65, 100-106, 132-135, Phe139, and Arg142; these read DIG, FPDTD, AQAPKMA, and TTTE.

The protein belongs to the IspF family. In terms of assembly, homotrimer. A divalent metal cation serves as cofactor.

It carries out the reaction 4-CDP-2-C-methyl-D-erythritol 2-phosphate = 2-C-methyl-D-erythritol 2,4-cyclic diphosphate + CMP. Its pathway is isoprenoid biosynthesis; isopentenyl diphosphate biosynthesis via DXP pathway; isopentenyl diphosphate from 1-deoxy-D-xylulose 5-phosphate: step 4/6. Functionally, involved in the biosynthesis of isopentenyl diphosphate (IPP) and dimethylallyl diphosphate (DMAPP), two major building blocks of isoprenoid compounds. Catalyzes the conversion of 4-diphosphocytidyl-2-C-methyl-D-erythritol 2-phosphate (CDP-ME2P) to 2-C-methyl-D-erythritol 2,4-cyclodiphosphate (ME-CPP) with a corresponding release of cytidine 5-monophosphate (CMP). The protein is 2-C-methyl-D-erythritol 2,4-cyclodiphosphate synthase of Cronobacter sakazakii (strain ATCC BAA-894) (Enterobacter sakazakii).